Reading from the N-terminus, the 60-residue chain is Large ribosomal subunit protein bL32 (60 aa).

The disordered stretch occupies residues 1–23; sequence MAVPKRKKSKSRRNMHRSHHAIK.

This sequence belongs to the bacterial ribosomal protein bL32 family.

This is Large ribosomal subunit protein bL32 from Wolbachia pipientis subsp. Culex pipiens (strain wPip).